The primary structure comprises 474 residues: Carbohydrate sulfotransferase 3 (474 aa).

The Cytoplasmic portion of the chain corresponds to 1-19 (MEKGLALPQDCRDLVHNLK). The chain crosses the membrane as a helical; Signal-anchor for type II membrane protein span at residues 20 to 38 (IRGRYVLFLAFVVIVFIFI). Over 39 to 474 (EKENKIISRV…LEERGTFWVT (436 aa)) the chain is Lumenal. 3 N-linked (GlcNAc...) asparagine glycosylation sites follow: N63, N74, and N96. A 3'-phosphoadenylyl sulfate-binding site is contributed by 137–143 (TRTGSSF). The N-linked (GlcNAc...) asparagine glycan is linked to N252. 297 to 305 (RDPRAVLAS) serves as a coordination point for 3'-phosphoadenylyl sulfate. 2 N-linked (GlcNAc...) asparagine glycosylation sites follow: N415 and N459.

The protein belongs to the sulfotransferase 1 family. Gal/GlcNAc/GalNAc subfamily. Post-translationally, N-glycosylated.

Its subcellular location is the golgi apparatus membrane. The enzyme catalyses chondroitin beta-D-glucuronate + n 3'-phosphoadenylyl sulfate = chondroitin 6'-sulfate + n adenosine 3',5'-bisphosphate + n H(+). It carries out the reaction 3'-phosphoadenylyl sulfate + keratan = adenosine 3',5'-bisphosphate + keratan 6'-sulfate.. In terms of biological role, sulfotransferase that utilizes 3'-phospho-5'-adenylyl sulfate (PAPS) as sulfonate donor to catalyze the transfer of sulfate to position 6 of the N-acetylgalactosamine (GalNAc) residue of chondroitin. Chondroitin sulfate constitutes the predominant proteoglycan present in cartilage and is distributed on the surfaces of many cells and extracellular matrices. Catalyzes with a lower efficiency the sulfation of Gal residues of keratan sulfate, another glycosaminoglycan. Can also catalyze the sulfation of the Gal residues in sialyl N-acetyllactosamine (sialyl LacNAc) oligosaccharides. May play a role in the maintenance of naive T-lymphocytes in the spleen. The polypeptide is Carbohydrate sulfotransferase 3 (Chst3) (Rattus norvegicus (Rat)).